The chain runs to 129 residues: Ribosome-binding factor A (129 aa).

The protein belongs to the RbfA family. In terms of assembly, monomer. Binds 30S ribosomal subunits, but not 50S ribosomal subunits or 70S ribosomes.

It is found in the cytoplasm. One of several proteins that assist in the late maturation steps of the functional core of the 30S ribosomal subunit. Associates with free 30S ribosomal subunits (but not with 30S subunits that are part of 70S ribosomes or polysomes). Required for efficient processing of 16S rRNA. May interact with the 5'-terminal helix region of 16S rRNA. In Thioalkalivibrio sulfidiphilus (strain HL-EbGR7), this protein is Ribosome-binding factor A.